Consider the following 614-residue polypeptide: Probable glycerol-3-phosphate dehydrogenase (614 aa).

57–85 is an FAD binding site; sequence DLVVVGGGSTGAGCALDGATRGLKVALVD. Residues 595–614 are disordered; the sequence is MECPEEKRHRGERRLPPQEK. A compositionally biased stretch (basic and acidic residues) spans 598–614; sequence PEEKRHRGERRLPPQEK.

This sequence belongs to the FAD-dependent glycerol-3-phosphate dehydrogenase family. FAD is required as a cofactor.

The protein resides in the cytoplasm. The catalysed reaction is a quinone + sn-glycerol 3-phosphate = dihydroxyacetone phosphate + a quinol. It functions in the pathway polyol metabolism; glycerol degradation via glycerol kinase pathway; glycerone phosphate from sn-glycerol 3-phosphate (anaerobic route): step 1/1. This chain is Probable glycerol-3-phosphate dehydrogenase, found in Encephalitozoon cuniculi (strain GB-M1) (Microsporidian parasite).